Here is a 497-residue protein sequence, read N- to C-terminus: Glycerol kinase (497 aa).

Thr-11 lines the ADP pocket. 3 residues coordinate ATP: Thr-11, Ser-12, and Ser-13. Thr-11 is a sn-glycerol 3-phosphate binding site. ADP is bound at residue Arg-15. Sn-glycerol 3-phosphate is bound by residues Arg-81, Glu-82, Tyr-133, and Asp-242. The glycerol site is built by Arg-81, Glu-82, Tyr-133, Asp-242, and Gln-243. ADP contacts are provided by Thr-264 and Gly-307. Residues Thr-264, Gly-307, Gln-311, and Gly-412 each coordinate ATP. Positions 412 and 416 each coordinate ADP.

It belongs to the FGGY kinase family.

The catalysed reaction is glycerol + ATP = sn-glycerol 3-phosphate + ADP + H(+). Its pathway is polyol metabolism; glycerol degradation via glycerol kinase pathway; sn-glycerol 3-phosphate from glycerol: step 1/1. Inhibited by fructose 1,6-bisphosphate (FBP). Functionally, key enzyme in the regulation of glycerol uptake and metabolism. Catalyzes the phosphorylation of glycerol to yield sn-glycerol 3-phosphate. The polypeptide is Glycerol kinase (Variovorax paradoxus (strain S110)).